A 294-amino-acid chain; its full sequence is ATP synthase gamma chain (294 aa).

Belongs to the ATPase gamma chain family. As to quaternary structure, F-type ATPases have 2 components, CF(1) - the catalytic core - and CF(0) - the membrane proton channel. CF(1) has five subunits: alpha(3), beta(3), gamma(1), delta(1), epsilon(1). CF(0) has three main subunits: a, b and c.

The protein localises to the cell inner membrane. Its function is as follows. Produces ATP from ADP in the presence of a proton gradient across the membrane. The gamma chain is believed to be important in regulating ATPase activity and the flow of protons through the CF(0) complex. This is ATP synthase gamma chain from Rhizobium etli (strain CIAT 652).